The chain runs to 346 residues: Angiopoietin-related protein 7 (346 aa).

The signal sequence occupies residues 1 to 26 (MLKKPLSAVTWLCIFIVAFVSHPAWL). The stretch at 39–119 (QLKAANCCEE…DIMQLQAAQT (81 aa)) forms a coiled coil. A glycan (N-linked (GlcNAc...) asparagine) is linked at Asn-58. The Fibrinogen C-terminal domain maps to 122–343 (QTSADAIYDC…RVEMKIRPED (222 aa)). A disulfide bridge connects residues Cys-131 and Cys-162. N-linked (GlcNAc...) asparagine glycosylation is found at Asn-253 and Asn-267. A disulfide bridge links Cys-285 with Cys-298.

In terms of assembly, homotetramer; disulfide-linked. As to expression, highly expressed in the cornea (at protein level). Expression is restricted to the stromal layer. Also detected at the junction between the corneal stromal layer and the conjuctiva. Not detected in the sclera.

The protein localises to the secreted. Has a role in the formation and organization of the extracellular matrix. In the eye, it functions as a mediator of dexamethasone-induced matrix deposition in the trabecular meshwork, the tissue responsible for the outflow of the ocular aqueous humor and for the maintenance of intraocular pressure. Is a negative regulator of angiogenesis in the cornea, and plays a major role in maintaining corneal avascularity and transparency. This is Angiopoietin-related protein 7 (ANGPTL7) from Homo sapiens (Human).